A 361-amino-acid chain; its full sequence is DNA replication and repair protein RecF (361 aa).

Residue 30 to 37 (GPNGSGKT) coordinates ATP.

This sequence belongs to the RecF family.

The protein resides in the cytoplasm. In terms of biological role, the RecF protein is involved in DNA metabolism; it is required for DNA replication and normal SOS inducibility. RecF binds preferentially to single-stranded, linear DNA. It also seems to bind ATP. In Erwinia tasmaniensis (strain DSM 17950 / CFBP 7177 / CIP 109463 / NCPPB 4357 / Et1/99), this protein is DNA replication and repair protein RecF.